Reading from the N-terminus, the 526-residue chain is Protein mono-ADP-ribosyltransferase PARP3 (526 aa).

Residues methionine 1–proline 55 form a disordered region. The 91-residue stretch at aspartate 61–tyrosine 151 folds into the WGR domain. Positions proline 183–alanine 301 constitute a PARP alpha-helical domain. The region spanning histidine 312–phenylalanine 526 is the PARP catalytic domain.

It belongs to the ARTD/PARP family.

It is found in the nucleus. It localises to the chromosome. The protein resides in the cytoplasm. The protein localises to the cytoskeleton. Its subcellular location is the microtubule organizing center. It is found in the centrosome. It localises to the centriole. The catalysed reaction is L-aspartyl-[protein] + NAD(+) = 4-O-(ADP-D-ribosyl)-L-aspartyl-[protein] + nicotinamide. It catalyses the reaction L-glutamyl-[protein] + NAD(+) = 5-O-(ADP-D-ribosyl)-L-glutamyl-[protein] + nicotinamide. The enzyme catalyses L-lysyl-[protein] + NAD(+) = N(6)-(ADP-D-ribosyl)-L-lysyl-[protein] + nicotinamide + H(+). In terms of biological role, mono-ADP-ribosyltransferase that mediates mono-ADP-ribosylation of target proteins and plays a key role in the response to DNA damage. Mediates mono-ADP-ribosylation of glutamate, aspartate or lysine residues on target proteins. In contrast to PARP1 and PARP2, it is not able to mediate poly-ADP-ribosylation. Involved in DNA repair by mediating mono-ADP-ribosylation of a limited number of acceptor proteins involved in chromatin architecture and in DNA metabolism, such as histone H2B, XRCC5 and XRCC6. ADP-ribosylation follows DNA damage and appears as an obligatory step in a detection/signaling pathway leading to the reparation of DNA strand breaks. Involved in single-strand break repair by catalyzing mono-ADP-ribosylation of histone H2B on 'Glu-2' (H2BE2ADPr) of nucleosomes containing nicked DNA. Cooperates with the XRCC5-XRCC6 (Ku80-Ku70) heterodimer to limit end-resection thereby promoting accurate NHEJ. Associates with a number of DNA repair factors and is involved in the response to exogenous and endogenous DNA strand breaks. Together with APLF, promotes the retention of the LIG4-XRCC4 complex on chromatin and accelerate DNA ligation during non-homologous end-joining (NHEJ). In addition to proteins, also able to ADP-ribosylate DNA: mediates DNA mono-ADP-ribosylation of DNA strand break termini via covalent addition of a single ADP-ribose moiety to a 5'- or 3'-terminal phosphate residues in DNA containing multiple strand breaks. The protein is Protein mono-ADP-ribosyltransferase PARP3 of Gallus gallus (Chicken).